A 421-amino-acid polypeptide reads, in one-letter code: Membrane-associated protein UidC (421 aa).

A signal peptide spans 1–23 (MRKIVAMAVICLTAASGLTSAYA).

It belongs to the outer membrane porin (Opr) (TC 1.B.25) family.

The protein resides in the cell outer membrane. Enhances the activity of the UidB (GusB) glucuronide transporter, on its own however it has no transport activity. Glucuronide transport does not occur in strain K12 due to a variant at position 100 of the UidB (GusB, AC P0CE44, AC P0CE45) protein. The chain is Membrane-associated protein UidC (uidC) from Escherichia coli (strain K12).